We begin with the raw amino-acid sequence, 302 residues long: GTPase Era (302 aa).

One can recognise an Era-type G domain in the interval lysine 4–glutamate 171. A G1 region spans residues glycine 12–serine 19. Glycine 12–serine 19 contacts GTP. The segment at glutamine 38–asparagine 42 is G2. Positions aspartate 59–glycine 62 are G3. Residues aspartate 59–isoleucine 63 and asparagine 121–aspartate 124 contribute to the GTP site. The tract at residues asparagine 121–aspartate 124 is G4. A G5 region spans residues isoleucine 150 to alanine 152. Residues leucine 202–lysine 280 enclose the KH type-2 domain.

The protein belongs to the TRAFAC class TrmE-Era-EngA-EngB-Septin-like GTPase superfamily. Era GTPase family. As to quaternary structure, monomer.

The protein resides in the cytoplasm. It is found in the cell membrane. Functionally, an essential GTPase that binds both GDP and GTP, with rapid nucleotide exchange. Plays a role in 16S rRNA processing and 30S ribosomal subunit biogenesis and possibly also in cell cycle regulation and energy metabolism. This Thermoanaerobacter pseudethanolicus (strain ATCC 33223 / 39E) (Clostridium thermohydrosulfuricum) protein is GTPase Era.